The sequence spans 308 residues: MATVINNAMLEAILAEIRPLIGRGKVADYIPALASVSGDKLGIAISTVDGQHFAAGDAHERFSIQSISKVLSLVVAMNHYQEEEIWQRVGKDPSGQPFNSLLQLEIEQGKPRNPFINAGALVVCDMLQSRLSAPRQRMLEIVRRLSGVADIAYDPVVARSEFEHSARNAAIAWLMKSFGNFHNDVATVLQNYFHYCSLEMSCVELARTFLFLADRGIAPHLDAPVIAPIQSRQVNALMMTSGMYQNAGEFAWRVGLPAKSGVGGGIVAIVPQEMAIAVWSPELDDAGNSLAGVAMLEKLTQRMGRSVF.

The substrate site is built by Ser66, Asn117, Glu161, Asn168, Tyr192, Tyr244, and Val262.

It belongs to the glutaminase family. In terms of assembly, homotetramer.

It catalyses the reaction L-glutamine + H2O = L-glutamate + NH4(+). The chain is Glutaminase from Klebsiella pneumoniae subsp. pneumoniae (strain ATCC 700721 / MGH 78578).